Here is a 316-residue protein sequence, read N- to C-terminus: Transcription initiation factor IIB (316 aa).

Residues Pro11–Gly42 form a TFIIB-type zinc finger. Cys15, His18, Cys34, and Cys37 together coordinate Zn(2+). Repeat copies occupy residues Met124 to Lys200 and Phe218 to Pro294.

Belongs to the TFIIB family.

Its subcellular location is the nucleus. The protein resides in the chromosome. It carries out the reaction L-lysyl-[protein] + acetyl-CoA = N(6)-acetyl-L-lysyl-[protein] + CoA + H(+). General transcription factor that plays a role in transcription initiation by RNA polymerase II (Pol II). Involved in the pre-initiation complex (PIC) formation and Pol II recruitment at promoter DNA. Together with the TATA box-bound TBP forms the core initiation complex and provides a bridge between TBP and the Pol II-TFIIF complex. Released from the PIC early following the onset of transcription during the initiation and elongation transition and reassociates with TBP during the next transcription cycle. Associates with chromatin to core promoter-specific regions. Binds to two distinct DNA core promoter consensus sequence elements in a TBP-independent manner; these IIB-recognition elements (BREs) are localized immediately upstream (BREu), 5'-[GC][GC][GA]CGCC-3', and downstream (BREd), 5'-[GA]T[TGA][TG][GT][TG][TG]-3', of the TATA box element. Modulates transcription start site selection. Also exhibits autoacetyltransferase activity that contributes to the activated transcription. The protein is Transcription initiation factor IIB of Xenopus laevis (African clawed frog).